Consider the following 267-residue polypeptide: MSRAVRPYLVLATQRSGSTLLVESLRATGCAGEPQEFFQYLPSTGMAPQPREWFAGVDDDTILQLLDPLDPGTPDTATPVAWREHVRTSGRTPNGVWGGKLMWNQTALLQQRAAQLPDRSGDGLRAAIRDVIGNEPVFVHVHRPDVVSQAVSFWRAVQTQVWRGHPDPKRDSQAVYHAGAIAHIIRNLRDQENGWRAWFAEEGIDPIDIAYPVLWRNLTAIVASVLDAIGQDPKLAPAPMLERQANQRSDEWVDRYRAEAPRLGLPT.

Residues Gln14, 33–39 (EPQEFFQ), Pro48, and Trp53 each bind alpha,alpha-trehalose. Glu36 functions as the Proton acceptor in the catalytic mechanism.

The protein belongs to the Stf0 sulfotransferase family. As to quaternary structure, homodimer.

It carries out the reaction alpha,alpha-trehalose + 3'-phosphoadenylyl sulfate = 2-O-sulfo-alpha,alpha-trehalose + adenosine 3',5'-bisphosphate + H(+). Its pathway is glycolipid metabolism. Its function is as follows. Catalyzes the sulfuryl group transfer from 3'-phosphoadenosine-5'-phosphosulfate (PAPS) to trehalose, leading to trehalose-2-sulfate (T2S). The sulfation of trehalose is the first step in the biosynthesis of sulfolipid-1 (SL-1), a major cell wall glycolipid and the most abundant sulfated metabolite found in Mycobacterium tuberculosis, that is a potential virulence factor thought to mediate host-pathogen interactions. This chain is Trehalose 2-sulfotransferase, found in Mycobacterium tuberculosis (strain ATCC 35801 / TMC 107 / Erdman).